Reading from the N-terminus, the 445-residue chain is UPF0210 protein SZO_15840 (445 aa).

The protein belongs to the UPF0210 family. In terms of assembly, homodimer.

This chain is UPF0210 protein SZO_15840, found in Streptococcus equi subsp. zooepidemicus (strain H70).